A 137-amino-acid chain; its full sequence is NADH dehydrogenase [ubiquinone] 1 beta subcomplex subunit 7 (137 aa).

The N-myristoyl glycine moiety is linked to residue Gly-2. A CHCH domain is found at 56 to 98 (RDYCAHYLIRFLKCKRDSFPNFLACKHERHDWDYCEHLDYVKR). Positions 59 to 69 (CAHYLIRFLKC) match the Cx9C motif 1 motif. Intrachain disulfides connect Cys-59-Cys-90 and Cys-69-Cys-80. Ser-73 is subject to Phosphoserine. The Cx9C motif 2 signature appears at 80-90 (CKHERHDWDYC). The interval 110 to 137 (QRKKRREQREADMAKGLGPGEVAPEVAL) is disordered.

This sequence belongs to the complex I NDUFB7 subunit family. In terms of assembly, complex I is composed of 45 different subunits.

It localises to the mitochondrion inner membrane. The protein localises to the mitochondrion intermembrane space. Accessory subunit of the mitochondrial membrane respiratory chain NADH dehydrogenase (Complex I), that is believed not to be involved in catalysis. Complex I functions in the transfer of electrons from NADH to the respiratory chain. The immediate electron acceptor for the enzyme is believed to be ubiquinone. This Bos taurus (Bovine) protein is NADH dehydrogenase [ubiquinone] 1 beta subcomplex subunit 7 (NDUFB7).